A 347-amino-acid chain; its full sequence is tRNA N6-adenosine threonylcarbamoyltransferase (347 aa).

Fe cation-binding residues include His-113 and His-117. Substrate contacts are provided by residues Ile-136–Gly-140, Asp-170, Gly-183, Asp-187, and Asn-282. Residue Asp-310 participates in Fe cation binding.

This sequence belongs to the KAE1 / TsaD family. Fe(2+) is required as a cofactor.

The protein localises to the cytoplasm. It carries out the reaction L-threonylcarbamoyladenylate + adenosine(37) in tRNA = N(6)-L-threonylcarbamoyladenosine(37) in tRNA + AMP + H(+). Its function is as follows. Required for the formation of a threonylcarbamoyl group on adenosine at position 37 (t(6)A37) in tRNAs that read codons beginning with adenine. Is involved in the transfer of the threonylcarbamoyl moiety of threonylcarbamoyl-AMP (TC-AMP) to the N6 group of A37, together with TsaE and TsaB. TsaD likely plays a direct catalytic role in this reaction. The protein is tRNA N6-adenosine threonylcarbamoyltransferase of Bifidobacterium longum (strain NCC 2705).